A 227-amino-acid polypeptide reads, in one-letter code: Small ribosomal subunit protein uS3 (227 aa).

Residues 38-106 (LRKYLREKLA…EVHLNIVEIR (69 aa)) form the KH type-2 domain.

It belongs to the universal ribosomal protein uS3 family. As to quaternary structure, part of the 30S ribosomal subunit. Forms a tight complex with proteins S10 and S14.

In terms of biological role, binds the lower part of the 30S subunit head. Binds mRNA in the 70S ribosome, positioning it for translation. This Paramagnetospirillum magneticum (strain ATCC 700264 / AMB-1) (Magnetospirillum magneticum) protein is Small ribosomal subunit protein uS3.